Consider the following 193-residue polypeptide: dCTP deaminase (193 aa).

DCTP is bound by residues 110–115, Asp-128, 136–138, Tyr-171, Lys-178, and Gln-182; these read RSSLAR and VLE. Residue Glu-138 is the Proton donor/acceptor of the active site. Residues 174–193 are disordered; it reads RKSAKYKDQQEAVASRISQD.

The protein belongs to the dCTP deaminase family. Homotrimer.

The catalysed reaction is dCTP + H2O + H(+) = dUTP + NH4(+). It participates in pyrimidine metabolism; dUMP biosynthesis; dUMP from dCTP (dUTP route): step 1/2. Its function is as follows. Catalyzes the deamination of dCTP to dUTP. The polypeptide is dCTP deaminase (Shewanella baltica (strain OS223)).